We begin with the raw amino-acid sequence, 277 residues long: Large ribosomal subunit protein uL2 (277 aa).

Residues 199–277 are disordered; it reads DHMNTSVGKA…ILISRHKRKK (79 aa). Residues 209 to 220 are compositionally biased toward basic residues; sequence GRTRWMGRRPHN.

This sequence belongs to the universal ribosomal protein uL2 family. Part of the 50S ribosomal subunit. Forms a bridge to the 30S subunit in the 70S ribosome.

One of the primary rRNA binding proteins. Required for association of the 30S and 50S subunits to form the 70S ribosome, for tRNA binding and peptide bond formation. It has been suggested to have peptidyltransferase activity; this is somewhat controversial. Makes several contacts with the 16S rRNA in the 70S ribosome. In Nitrobacter winogradskyi (strain ATCC 25391 / DSM 10237 / CIP 104748 / NCIMB 11846 / Nb-255), this protein is Large ribosomal subunit protein uL2.